We begin with the raw amino-acid sequence, 589 residues long: MDEIDNIILHSLRQIECNLDEEVISLDDLSPSMLVQVVSKCISLIDPGLELPRTLPPGMAQRFTATASLAEACRTIGYRRDIGYQTFLYSNVAEVRRVLMFLVEKLPKEAADKTSGSGQPVDSATQLENRILSSLQSQLQAPWMPEFCQVGRPEGLSTTSGGESPAQIAFRRFIPRKISVPFVTQGDVAAEVKEFWSRRNLDCLDEGSLVPSLIAANDGAIKTNAKGAIDEVDRQVKLPAINEKLLQYYSKGGTKHRLAEPSGAAASSGTTEKVVLNNITVETKPGKTPLESLQEEIDALQQEIVQHSEEGVQLESSRKETDESIEEYRKTIVRLKEEKKIKERTHILLEDPEVNVKKLEAIIAAGGERMKKLQDQWDAHRIPLVDTLEAYRLKNSDKLSKSQQVLDQIESTRQKCEEVVIDLQTKGAMYARLQKEFEKLNKTVSRTAYTSRILEIIGNIRKQKNGIDQILQDTRSLQKEINNITGQLDRQFTVTDDLIFRNAKKDEHSKRAYKLLVTLHSDCEELIKLVQETGAIKREVRDLEDQIENEKGRNTAANLAQITHDLTEMQNESQRLEESIRRMEVTSRQ.

Coiled-coil stretches lie at residues 287-426 and 523-589; these read KTPL…LQTK and CEEL…TSRQ. The interval 568 to 589 is disordered; sequence EMQNESQRLEESIRRMEVTSRQ. A compositionally biased stretch (basic and acidic residues) spans 574 to 589; the sequence is QRLEESIRRMEVTSRQ.

Belongs to the CCDC22 family.

The polypeptide is Coiled-coil domain-containing protein 22 homolog (Aedes aegypti (Yellowfever mosquito)).